An 86-amino-acid chain; its full sequence is Putative regulatory protein Dvul_2085 (86 aa).

This sequence belongs to the RemA family.

The polypeptide is Putative regulatory protein Dvul_2085 (Nitratidesulfovibrio vulgaris (strain DP4) (Desulfovibrio vulgaris)).